The primary structure comprises 233 residues: Large ribosomal subunit protein eL6x (233 aa).

The segment covering 48-72 (HDAKSKVDAPVEKPPKFYPAEDVKK) has biased composition (basic and acidic residues). The interval 48–80 (HDAKSKVDAPVEKPPKFYPAEDVKKPLPNRRTA) is disordered.

This sequence belongs to the eukaryotic ribosomal protein eL6 family.

This chain is Large ribosomal subunit protein eL6x (RPL6C), found in Arabidopsis thaliana (Mouse-ear cress).